The chain runs to 286 residues: ATP synthase gamma chain (286 aa).

This sequence belongs to the ATPase gamma chain family. In terms of assembly, F-type ATPases have 2 components, CF(1) - the catalytic core - and CF(0) - the membrane proton channel. CF(1) has five subunits: alpha(3), beta(3), gamma(1), delta(1), epsilon(1). CF(0) has three main subunits: a, b and c.

It is found in the cell inner membrane. In terms of biological role, produces ATP from ADP in the presence of a proton gradient across the membrane. The gamma chain is believed to be important in regulating ATPase activity and the flow of protons through the CF(0) complex. The sequence is that of ATP synthase gamma chain from Christiangramia forsetii (strain DSM 17595 / CGMCC 1.15422 / KT0803) (Gramella forsetii).